Here is a 132-residue protein sequence, read N- to C-terminus: Small ribosomal subunit protein uS8c (132 aa).

It belongs to the universal ribosomal protein uS8 family. Part of the 30S ribosomal subunit.

The protein resides in the plastid. Its subcellular location is the chloroplast. Its function is as follows. One of the primary rRNA binding proteins, it binds directly to 16S rRNA central domain where it helps coordinate assembly of the platform of the 30S subunit. The sequence is that of Small ribosomal subunit protein uS8c (rps8) from Amborella trichopoda.